The chain runs to 869 residues: Bifunctional uridylyltransferase/uridylyl-removing enzyme (869 aa).

The segment at 1 to 332 (MTATPADRPD…QFDGEAVPVQ (332 aa)) is uridylyltransferase. Residues 333 to 691 (LDAGFSLRRG…RRAVPDNDAL (359 aa)) are uridylyl-removing. Residues 450-572 (VDQHTLMVLR…VGTRERLDYL (123 aa)) form the HD domain. 2 consecutive ACT domains span residues 692-771 (EVFV…PSRR) and 798-869 (RISL…LDPT).

This sequence belongs to the GlnD family. The cofactor is Mg(2+).

The enzyme catalyses [protein-PII]-L-tyrosine + UTP = [protein-PII]-uridylyl-L-tyrosine + diphosphate. It carries out the reaction [protein-PII]-uridylyl-L-tyrosine + H2O = [protein-PII]-L-tyrosine + UMP + H(+). Its activity is regulated as follows. Uridylyltransferase (UTase) activity is inhibited by glutamine, while glutamine activates uridylyl-removing (UR) activity. In terms of biological role, modifies, by uridylylation and deuridylylation, the PII regulatory proteins (GlnB and homologs), in response to the nitrogen status of the cell that GlnD senses through the glutamine level. Under low glutamine levels, catalyzes the conversion of the PII proteins and UTP to PII-UMP and PPi, while under higher glutamine levels, GlnD hydrolyzes PII-UMP to PII and UMP (deuridylylation). Thus, controls uridylylation state and activity of the PII proteins, and plays an important role in the regulation of nitrogen assimilation and metabolism. This chain is Bifunctional uridylyltransferase/uridylyl-removing enzyme, found in Xanthomonas campestris pv. campestris (strain B100).